Consider the following 200-residue polypeptide: Glycerol-3-phosphate acyltransferase (200 aa).

Helical transmembrane passes span Phe2–Val22, Lys51–Ala71, Ala84–Phe104, Leu114–Val134, and Leu158–Leu178.

It belongs to the PlsY family. As to quaternary structure, probably interacts with PlsX.

The protein resides in the cell inner membrane. The enzyme catalyses an acyl phosphate + sn-glycerol 3-phosphate = a 1-acyl-sn-glycero-3-phosphate + phosphate. The protein operates within lipid metabolism; phospholipid metabolism. Its function is as follows. Catalyzes the transfer of an acyl group from acyl-phosphate (acyl-PO(4)) to glycerol-3-phosphate (G3P) to form lysophosphatidic acid (LPA). This enzyme utilizes acyl-phosphate as fatty acyl donor, but not acyl-CoA or acyl-ACP. This chain is Glycerol-3-phosphate acyltransferase, found in Neisseria gonorrhoeae (strain ATCC 700825 / FA 1090).